The following is a 216-amino-acid chain: Penicillin-binding protein activator LpoB (216 aa).

Residues 1-20 (MIKNLSRYALVTAFALFLSG) form the signal peptide. Cys-21 carries N-palmitoyl cysteine lipidation. Cys-21 is lipidated: S-diacylglycerol cysteine. Residues 28–77 (QPAPVDEAKPGTEQPAQPTQPVPTVPSVPTVPAQPGPIEHPDQTSQPAPR) form a disordered region.

This sequence belongs to the LpoB family. As to quaternary structure, interacts with PBP1b.

Its subcellular location is the cell outer membrane. Regulator of peptidoglycan synthesis that is essential for the function of penicillin-binding protein 1B (PBP1b). The polypeptide is Penicillin-binding protein activator LpoB (Enterobacter sp. (strain 638)).